A 1405-amino-acid chain; its full sequence is Protein crumbs homolog 1 (1405 aa).

A signal peptide spans 1–27 (MKLKRTAYLLFLYLSSSLLICIKNSFC). At 28-1339 (NKNNTRCLSG…RCELDLADDR (1312 aa)) the chain is on the extracellular side. Positions 30-67 (NNTRCLSGPCQNNSTCKHFPQDNNCCLDTANNLDKDCE) constitute an EGF-like 1; atypical domain. 33 cysteine pairs are disulfide-bonded: cysteine 34-cysteine 45, cysteine 39-cysteine 54, cysteine 55-cysteine 66, cysteine 73-cysteine 84, cysteine 78-cysteine 95, cysteine 97-cysteine 106, cysteine 113-cysteine 124, cysteine 118-cysteine 133, cysteine 135-cysteine 144, cysteine 151-cysteine 162, cysteine 156-cysteine 171, cysteine 173-cysteine 182, cysteine 189-cysteine 200, cysteine 194-cysteine 209, cysteine 211-cysteine 220, cysteine 227-cysteine 238, cysteine 232-cysteine 247, cysteine 249-cysteine 258, cysteine 265-cysteine 276, cysteine 270-cysteine 285, cysteine 287-cysteine 297, cysteine 304-cysteine 315, cysteine 309-cysteine 324, cysteine 326-cysteine 335, cysteine 342-cysteine 353, cysteine 347-cysteine 382, cysteine 384-cysteine 393, cysteine 400-cysteine 411, cysteine 405-cysteine 420, cysteine 422-cysteine 437, cysteine 444-cysteine 455, cysteine 449-cysteine 468, and cysteine 470-cysteine 479. Residue asparagine 41 is glycosylated (N-linked (GlcNAc...) asparagine). EGF-like domains follow at residues 69–107 (LKDP…LNCE) and 109–145 (ATNS…RFCE). The EGF-like 4; calcium-binding domain maps to 147 to 183 (DHNECASSPCHNGAMCQDGINGYSCFCVPGYQGRHCD). The 37-residue stretch at 185 to 221 (EVDECVSDPCKNEAVCLNEIGRYTCVCPQEFSGVNCE) folds into the EGF-like 5; calcium-binding domain. The region spanning 223-259 (EIDECRSQPCLHGATCQDAPGGYSCDCAPGFLGEHCE) is the EGF-like 6; calcium-binding domain. 5 EGF-like domains span residues 261 to 298 (SVNE…MHCE), 300 to 336 (LIPL…ALCE), 338 to 394 (DINE…IHCE), 396 to 438 (DVDE…ENCS), and 440 to 480 (ILLG…PLCE). Residues 482-669 (VTTLSFGSNG…GLSSNVKAGC (188 aa)) form the Laminin G-like 1 domain. N-linked (GlcNAc...) asparagine glycans are attached at residues asparagine 560 and asparagine 656. 4 disulfides stabilise this stretch: cysteine 641–cysteine 669, cysteine 675–cysteine 686, cysteine 680–cysteine 695, and cysteine 697–cysteine 706. The 37-residue stretch at 671 to 707 (GKDWCESQPCQNRGRCINLWQGYQCECDRPYTGSNCL) folds into the EGF-like 12 domain. Residues 713 to 884 (GRFGQDDSTG…PILVNVTQGC (172 aa)) form the Laminin G-like 2 domain. N-linked (GlcNAc...) asparagine glycans are attached at residues asparagine 756 and asparagine 879. 6 cysteine pairs are disulfide-bonded: cysteine 850–cysteine 884, cysteine 890–cysteine 901, cysteine 895–cysteine 910, cysteine 912–cysteine 921, cysteine 927–cysteine 938, and cysteine 932–cysteine 947. EGF-like domains lie at 886–922 (GDNT…RACE) and 923–959 (QVQW…LSRE). Residues 950-1136 (NAVFSGLSRE…VSTNMVLTGC (187 aa)) enclose the Laminin G-like 3 domain. N-linked (GlcNAc...) asparagine glycosylation is found at asparagine 967, asparagine 974, and asparagine 999. Intrachain disulfides connect cysteine 1095/cysteine 1136, cysteine 1142/cysteine 1153, cysteine 1147/cysteine 1162, cysteine 1164/cysteine 1173, cysteine 1180/cysteine 1190, cysteine 1185/cysteine 1199, cysteine 1201/cysteine 1210, cysteine 1217/cysteine 1228, cysteine 1222/cysteine 1237, cysteine 1239/cysteine 1248, cysteine 1258/cysteine 1273, cysteine 1267/cysteine 1282, cysteine 1284/cysteine 1293, cysteine 1300/cysteine 1311, cysteine 1305/cysteine 1320, and cysteine 1322/cysteine 1331. The EGF-like 15 domain occupies 1138–1174 (PSNACHSSPCLHGGNCEDSYSSYRCACLSGWSGTHCE). An EGF-like 16; calcium-binding domain is found at 1176-1211 (NIDECFSSPCIHGNCSDGVAAYHCRCEPGYTGVNCE). Residue asparagine 1189 is glycosylated (N-linked (GlcNAc...) asparagine). EGF-like domains lie at 1213 to 1249 (DVDN…RFCR) and 1254 to 1294 (PSTV…EWCE). N-linked (GlcNAc...) asparagine glycosylation is found at asparagine 1242 and asparagine 1264. The 37-residue stretch at 1296–1332 (DINECASDPCINGGLCRDLVNRFLCICDVAFAGERCE) folds into the EGF-like 19; calcium-binding domain. The helical transmembrane segment at 1340–1360 (LLGIFTAVGSGTLALFFILLL) threads the bilayer. The Cytoplasmic portion of the chain corresponds to 1361–1405 (AGVASLIASNKRATQGTYSPSGQEKAGPRVEMWIRMPPPALERLI).

The protein belongs to the Crumbs protein family. As to quaternary structure, component of a complex composed of PALS1, CRB1 and EPB41L5. Within the complex, interacts (via intracellular domain) with PALS1 and EPB41L5 (via FERM domain). Forms a complex with MPP4 and PALS1. Interacts with MPDZ/MUPP1 and MPP4. In terms of processing, glycosylated. Expressed in the kidney, lung, stomach and testis. Expressed in the brain. Expressed in the retina of the eye. Expressed in the outer nuclear layer, photoreceptor layer and inner nuclear layer of the retina. Expressed in Mueller cell radial processes in the inner nuclear layer, in apical processes sclerad to the external limiting membrane, and in the subapical region, adjacent to the adherens junction of retinal photoreceptors. In the brain, expressed in the granular layer of the cerebellum, the hippocampal dentate gyrus, the olfactory bulbs, the subventricular region lining the telencephalic ventricles and the rostral migratory stream. As to expression, ubiquitously expressed.

Its subcellular location is the apical cell membrane. It is found in the secreted. It localises to the cell projection. The protein resides in the cilium. The protein localises to the photoreceptor outer segment. Its subcellular location is the photoreceptor inner segment. It is found in the cytoplasm. It localises to the cell junction. The protein resides in the focal adhesion. Its function is as follows. Plays a role in photoreceptor morphogenesis in the retina. May maintain cell polarization and adhesion. Functionally, may play a role in epidermal tissue morphogenesis. May function in cell attachment for stratified epithelial organization. This chain is Protein crumbs homolog 1 (Crb1), found in Mus musculus (Mouse).